The sequence spans 360 residues: S-adenosylmethionine:tRNA ribosyltransferase-isomerase (360 aa).

The protein belongs to the QueA family. Monomer.

The protein resides in the cytoplasm. The catalysed reaction is 7-aminomethyl-7-carbaguanosine(34) in tRNA + S-adenosyl-L-methionine = epoxyqueuosine(34) in tRNA + adenine + L-methionine + 2 H(+). The protein operates within tRNA modification; tRNA-queuosine biosynthesis. Transfers and isomerizes the ribose moiety from AdoMet to the 7-aminomethyl group of 7-deazaguanine (preQ1-tRNA) to give epoxyqueuosine (oQ-tRNA). This chain is S-adenosylmethionine:tRNA ribosyltransferase-isomerase, found in Rhizobium rhizogenes (strain K84 / ATCC BAA-868) (Agrobacterium radiobacter).